Consider the following 276-residue polypeptide: Putative ABC transporter ATP-binding protein MA_4021 (276 aa).

Residues 5–247 (FDLKNISYSY…DLNLLLSTNL (243 aa)) form the ABC transporter domain. 38–45 (GSNGSGKS) lines the ATP pocket.

The protein belongs to the ABC transporter superfamily.

The protein resides in the cell membrane. Probably part of an ABC transporter complex. Responsible for energy coupling to the transport system. This is Putative ABC transporter ATP-binding protein MA_4021 from Methanosarcina acetivorans (strain ATCC 35395 / DSM 2834 / JCM 12185 / C2A).